The following is a 359-amino-acid chain: Serine/threonine-protein kinase SAPK7 (359 aa).

Residues 4-260 enclose the Protein kinase domain; sequence YELLKDIGAG…IREIRNHPWF (257 aa). Residues 10 to 18 and Lys-33 contribute to the ATP site; that span reads IGAGNFGVA. Catalysis depends on Asp-123, which acts as the Proton acceptor. The disordered stretch occupies residues 299 to 359; the sequence is EEARTPPRSS…VHASGEFQLS (61 aa). The span at 331–343 shows a compositional bias: acidic residues; sequence EEQEEEEDAEDEY.

The protein belongs to the protein kinase superfamily. Ser/Thr protein kinase family. May be phosphorylated. As to expression, weakly expressed in roots. Expressed in roots of young seedlings.

The protein resides in the cytoplasm. The protein localises to the nucleus. It carries out the reaction L-seryl-[protein] + ATP = O-phospho-L-seryl-[protein] + ADP + H(+). It catalyses the reaction L-threonyl-[protein] + ATP = O-phospho-L-threonyl-[protein] + ADP + H(+). With respect to regulation, activated by hyperosmotic stress. May play a role in signal transduction of hyperosmotic response. This chain is Serine/threonine-protein kinase SAPK7 (SAPK7), found in Oryza sativa subsp. japonica (Rice).